The sequence spans 1247 residues: Protein jagged-2 (1247 aa).

The signal sequence occupies residues 1-23 (MRARGWGRLPRRLLLLLVLCVQA). Residues 24–1082 (TRPMGYFELQ…ETVVMGGSST (1059 aa)) are Extracellular-facing. N-linked (GlcNAc...) asparagine glycosylation is present at Asn153. The region spanning 196 to 240 (VRCDENYYSATCNKFCRPRNDFFGHYTCDQYGNKACMDGWMGKEC) is the DSL domain. Disulfide bonds link Cys198-Cys207, Cys211-Cys223, Cys231-Cys240, Cys245-Cys256, Cys249-Cys262, Cys264-Cys273, Cys276-Cys287, Cys282-Cys293, Cys295-Cys304, Cys311-Cys323, Cys317-Cys333, Cys335-Cys344, Cys351-Cys362, Cys356-Cys371, Cys373-Cys382, Cys389-Cys400, Cys394-Cys409, Cys411-Cys420, Cys427-Cys438, Cys432-Cys447, Cys449-Cys458, Cys465-Cys475, Cys469-Cys484, Cys486-Cys495, Cys502-Cys513, Cys507-Cys522, Cys524-Cys533, Cys540-Cys551, Cys545-Cys560, Cys562-Cys571, Cys589-Cys612, Cys606-Cys622, Cys624-Cys633, Cys640-Cys651, Cys645-Cys660, Cys662-Cys671, Cys678-Cys689, Cys683-Cys698, Cys700-Cys709, Cys716-Cys727, Cys721-Cys736, and Cys738-Cys747. Residues 241 to 274 (KEAVCKQGCNLLHGGCTVPGECRCSYGWQGKFCD) form the EGF-like 1 domain. Positions 275–305 (ECVPYPGCVHGSCVEPWHCDCETNWGGLLCD) constitute an EGF-like 2; atypical domain. EGF-like domains are found at residues 307-345 (DLNYCGSHHPCVNGGTCINAEPDQYLCACPDGYLGKNCE) and 347-383 (AEHACASNPCANGGSCHEVPSGFECHCPSGWNGPTCA). The EGF-like 5; calcium-binding domain maps to 385–421 (DIDECASNPCAAGGTCVDQVDGFECICPEQWVGATCQ). The 37-residue stretch at 423–459 (DANECEGKPCLNAFSCKNLIGGYYCDCLPGWKGINCQ) folds into the EGF-like 6; calcium-binding domain. The EGF-like 7; calcium-binding domain maps to 461–496 (NINDCHGQCQHGGTCKDLVNGYQCVCPRGFGGRHCE). 2 consecutive EGF-like domains span residues 498–534 (EYDKCASSPCRRGGICEDLVDGFRCHCPRGLSGLHCE) and 536–572 (DMDLCEPSPCLNGARCYNLEGDYYCACPEDFGGKNCS). Asn570 carries an N-linked (GlcNAc...) asparagine glycan. Residues 574-634 (PRDTCPGGAC…DSGFTGTYCH (61 aa)) enclose the EGF-like 10; atypical domain. Asn619 carries an N-linked (GlcNAc...) asparagine glycan. Residues 636 to 672 (NIDDCMGQPCRNGGTCIDEVDSFRCFCPSGWEGELCD) form the EGF-like 11; calcium-binding domain. Residues 674-710 (NPNDCLPDPCHSRGRCYDLVNDFYCACDDGWKGKTCH) enclose the EGF-like 12; calcium-binding domain. EGF-like domains follow at residues 712–748 (REFQCDAYTCSNGGTCYDSGDTFRCACPPGWKGSTCT) and 751–787 (KNSSCVPNPCVNGGTCVGSGDSFSCICRDGWEGRTCT). Asn752 carries N-linked (GlcNAc...) asparagine glycosylation. Disulfide bonds link Cys755–Cys766, Cys760–Cys775, Cys777–Cys786, Cys793–Cys804, Cys798–Cys813, Cys815–Cys824, Cys831–Cys842, Cys836–Cys851, and Cys853–Cys862. The region spanning 789–825 (NTNDCNPLPCYNGGICVDGVNWFRCECAPGFAGPDCR) is the EGF-like 15; calcium-binding domain. The EGF-like 16; calcium-binding domain maps to 827–863 (NIDECQSSPCAYGATCVDEINGYRCSCPPGRSGPRCQ). A glycan (N-linked (GlcNAc...) asparagine) is linked at Asn1060. The chain crosses the membrane as a helical span at residues 1083 to 1103 (GLLVPVLCSVFSVLWLACVVI). The Cytoplasmic segment spans residues 1104–1247 (CVWWTRKRRK…TKDVRRAGRE (144 aa)). Basic and acidic residues-rich tracts occupy residues 1115–1125 (RERSRLPRDES), 1192–1212 (LSRGDGDSPEAEKFISHKFTK), and 1230–1247 (VDNRAVRSTKDVRRAGRE). Disordered stretches follow at residues 1115–1148 (RERSRLPRDESANNQWAPLNPIRNPIERPGGSGL) and 1167–1247 (PRRA…AGRE). Residue Ser1125 is modified to Phosphoserine.

In terms of tissue distribution, found to be highest in fetal thymus, epidermis, foregut dorsal root ganglia and inner ear. In 2-weeK-old mice, abundant in heart, lung, thymus, skeletal muscle, brain and testis. Expression overlaps partially with Notch1 expression.

The protein resides in the membrane. Functionally, putative Notch ligand involved in the mediation of Notch signaling. Plays an essential role during limb, craniofacial and thymic development. May be involved in myogenesis and in the development of peripheral and central nervous systems. This Mus musculus (Mouse) protein is Protein jagged-2 (Jag2).